A 232-amino-acid chain; its full sequence is MKKVLFYVLPFAFFGCSATVDPQISMKPPAYVEELAPKQSNNVESAPGSLFGKGDNPLFSDKKAMNVNDLVTVVIQESTTQSTQANKATSRTNTSNLGGGALTGSSGVVANALNKVNAYSNIGFQTNSSNNYTGTGSQSRNESFNTTISTRVIKILSNGNYFIEGSRELLINGEKQIIQLSGVIRPYDIGQDNTIDSKYIADAKILYKTEGEVDRSTRKPWGSKVIEAIWPF.

A signal peptide spans 1–15 (MKKVLFYVLPFAFFG). Residue Cys16 is the site of N-palmitoyl cysteine attachment. The S-diacylglycerol cysteine moiety is linked to residue Cys16.

This sequence belongs to the FlgH family. As to quaternary structure, the basal body constitutes a major portion of the flagellar organelle and consists of four rings (L,P,S, and M) mounted on a central rod.

The protein localises to the cell outer membrane. It is found in the bacterial flagellum basal body. Functionally, assembles around the rod to form the L-ring and probably protects the motor/basal body from shearing forces during rotation. The polypeptide is Flagellar L-ring protein (Campylobacter jejuni subsp. jejuni serotype O:6 (strain 81116 / NCTC 11828)).